We begin with the raw amino-acid sequence, 443 residues long: ATP-dependent protease ATPase subunit HslU (443 aa).

ATP-binding positions include I18, G60–E65, D256, E321, and R393.

The protein belongs to the ClpX chaperone family. HslU subfamily. As to quaternary structure, a double ring-shaped homohexamer of HslV is capped on each side by a ring-shaped HslU homohexamer. The assembly of the HslU/HslV complex is dependent on binding of ATP.

It is found in the cytoplasm. In terms of biological role, ATPase subunit of a proteasome-like degradation complex; this subunit has chaperone activity. The binding of ATP and its subsequent hydrolysis by HslU are essential for unfolding of protein substrates subsequently hydrolyzed by HslV. HslU recognizes the N-terminal part of its protein substrates and unfolds these before they are guided to HslV for hydrolysis. This chain is ATP-dependent protease ATPase subunit HslU, found in Histophilus somni (strain 2336) (Haemophilus somnus).